We begin with the raw amino-acid sequence, 188 residues long: dCTP deaminase (188 aa).

DCTP is bound at residue 109 to 114 (KSTYAR). The Proton donor/acceptor role is filled by Glu135. Residues Gln154, Tyr168, and Gln178 each coordinate dCTP.

Belongs to the dCTP deaminase family. In terms of assembly, homotrimer.

The enzyme catalyses dCTP + H2O + H(+) = dUTP + NH4(+). The protein operates within pyrimidine metabolism; dUMP biosynthesis; dUMP from dCTP (dUTP route): step 1/2. Its function is as follows. Catalyzes the deamination of dCTP to dUTP. This Helicobacter pylori (strain J99 / ATCC 700824) (Campylobacter pylori J99) protein is dCTP deaminase.